The following is a 646-amino-acid chain: Acetyl-coenzyme A synthetase (646 aa).

CoA contacts are provided by residues arginine 189 to lysine 192, threonine 307, and asparagine 331. ATP is bound by residues glycine 383–proline 385, aspartate 407–threonine 412, aspartate 496, and arginine 511. A CoA-binding site is contributed by serine 519. Arginine 522 contributes to the ATP binding site. 3 residues coordinate Mg(2+): valine 533, histidine 535, and valine 538. CoA is bound at residue arginine 580. Lysine 605 carries the post-translational modification N6-acetyllysine.

This sequence belongs to the ATP-dependent AMP-binding enzyme family. Requires Mg(2+) as cofactor. Post-translationally, acetylated. Deacetylation by the SIR2-homolog deacetylase activates the enzyme.

The enzyme catalyses acetate + ATP + CoA = acetyl-CoA + AMP + diphosphate. In terms of biological role, catalyzes the conversion of acetate into acetyl-CoA (AcCoA), an essential intermediate at the junction of anabolic and catabolic pathways. AcsA undergoes a two-step reaction. In the first half reaction, AcsA combines acetate with ATP to form acetyl-adenylate (AcAMP) intermediate. In the second half reaction, it can then transfer the acetyl group from AcAMP to the sulfhydryl group of CoA, forming the product AcCoA. The chain is Acetyl-coenzyme A synthetase from Desulfatibacillum aliphaticivorans.